Reading from the N-terminus, the 261-residue chain is Small ribosomal subunit protein eS4 (261 aa).

The region spanning L42–D100 is the S4 RNA-binding domain.

The protein belongs to the eukaryotic ribosomal protein eS4 family.

Its subcellular location is the cytoplasm. The sequence is that of Small ribosomal subunit protein eS4 (RPS4) from Prunus armeniaca (Apricot).